The sequence spans 96 residues: Glutamyl-tRNA(Gln) amidotransferase subunit C (96 aa).

Belongs to the GatC family. As to quaternary structure, heterotrimer of A, B and C subunits.

The enzyme catalyses L-glutamyl-tRNA(Gln) + L-glutamine + ATP + H2O = L-glutaminyl-tRNA(Gln) + L-glutamate + ADP + phosphate + H(+). The catalysed reaction is L-aspartyl-tRNA(Asn) + L-glutamine + ATP + H2O = L-asparaginyl-tRNA(Asn) + L-glutamate + ADP + phosphate + 2 H(+). Allows the formation of correctly charged Asn-tRNA(Asn) or Gln-tRNA(Gln) through the transamidation of misacylated Asp-tRNA(Asn) or Glu-tRNA(Gln) in organisms which lack either or both of asparaginyl-tRNA or glutaminyl-tRNA synthetases. The reaction takes place in the presence of glutamine and ATP through an activated phospho-Asp-tRNA(Asn) or phospho-Glu-tRNA(Gln). This is Glutamyl-tRNA(Gln) amidotransferase subunit C from Deinococcus radiodurans (strain ATCC 13939 / DSM 20539 / JCM 16871 / CCUG 27074 / LMG 4051 / NBRC 15346 / NCIMB 9279 / VKM B-1422 / R1).